The following is a 398-amino-acid chain: uncharacterized protein (398 aa).

This is an uncharacterized protein from Buchnera aphidicola subsp. Baizongia pistaciae (strain Bp).